The primary structure comprises 197 residues: 7-methyl-GTP pyrophosphatase (197 aa).

The Proton acceptor role is filled by Asp-74.

Belongs to the Maf family. YceF subfamily. It depends on a divalent metal cation as a cofactor.

Its subcellular location is the cytoplasm. It carries out the reaction N(7)-methyl-GTP + H2O = N(7)-methyl-GMP + diphosphate + H(+). Functionally, nucleoside triphosphate pyrophosphatase that hydrolyzes 7-methyl-GTP (m(7)GTP). May have a dual role in cell division arrest and in preventing the incorporation of modified nucleotides into cellular nucleic acids. The protein is 7-methyl-GTP pyrophosphatase of Saccharophagus degradans (strain 2-40 / ATCC 43961 / DSM 17024).